Reading from the N-terminus, the 227-residue chain is PKHD-type hydroxylase BPSS1206 (227 aa).

One can recognise a Fe2OG dioxygenase domain in the interval 78–178 (KVFPPLFNRY…RVASFFWIQS (101 aa)). Fe cation-binding residues include H96, D98, and H159. Position 169 (R169) interacts with 2-oxoglutarate.

Requires Fe(2+) as cofactor. The cofactor is L-ascorbate.

This Burkholderia pseudomallei (strain K96243) protein is PKHD-type hydroxylase BPSS1206.